The primary structure comprises 975 residues: NLR family member X1 (975 aa).

A mitochondrion-targeting transit peptide spans 1–86 (MRWGHHLPRA…EAIQRHRRNL (86 aa)). Positions 75-556 (ATEAIQRHRR…RALPLLFNLI (482 aa)) are required for interaction with MAVS. The NACHT domain maps to 160–483 (QTVVLYGTVG…LRFFLAPCVE (324 aa)). 166–173 (GTVGTGKS) contributes to the ATP binding site. The required for the repression of MAVS-induced interferon signaling stretch occupies residues 556-974 (IKVVPRVFGR…ALLEQLGSSG (419 aa)). An LRRNT domain is found at 667 to 694 (RQVLPPSELLDHLFFHYEFQNQRFSAEV). LRR repeat units lie at residues 695–718 (LSSL…VVAA), 724–747 (RHAL…TLLP), 749–777 (FLRA…LLHD), 778–801 (QCQI…VLME), 811–834 (HLSL…LDRN), 835–857 (RQLQ…ALAR), 858–877 (AARE…ELSS), and 878–899 (EGRQ…VVVS). Residues 906–970 (VSEYWSVILS…GEVRALLEQL (65 aa)) enclose the LRRCT domain.

It belongs to the NLRP family. Homohexamer. Interacts with MAVS. Interacts with TUFM. As to quaternary structure, (Microbial infection) Interacts with influenza A virus protein PB1-F2. In terms of tissue distribution, ubiquitously expressed. Strongest expression in mammary gland, heart and muscle. Detected in HeLa, HEK293T, THP-1, HL-60, Raji and Jurkat cell lines (at protein level).

The protein resides in the mitochondrion outer membrane. Participates in antiviral signaling. Acts as a negative regulator of MAVS-mediated antiviral responses, through the inhibition of the virus-induced RLH (RIG-like helicase)-MAVS interaction. Instead, promotes autophagy by interacting with TUFM and subsequently recruiting the autophagy-related proteins ATG5 and ATG12. Also regulates MAVS-dependent NLRP3 inflammasome activation to attenuate apoptosis. Has no inhibitory function on NF-kappa-B signaling pathway, but enhances NF-kappa-B and JUN N-terminal kinase dependent signaling through the production of reactive oxygen species. Regulates viral mediated-inflammation and energy metabolism in a sex-dependent manner. In females, prevents uncontrolled inflammation and energy metabolism and thus, may contribute to the sex differences observed in infectious and inflammatory diseases. In Homo sapiens (Human), this protein is NLR family member X1 (NLRX1).